Here is a 118-residue protein sequence, read N- to C-terminus: Large ribosomal subunit protein bL20 (118 aa).

It belongs to the bacterial ribosomal protein bL20 family.

Functionally, binds directly to 23S ribosomal RNA and is necessary for the in vitro assembly process of the 50S ribosomal subunit. It is not involved in the protein synthesizing functions of that subunit. The chain is Large ribosomal subunit protein bL20 from Methylibium petroleiphilum (strain ATCC BAA-1232 / LMG 22953 / PM1).